The sequence spans 901 residues: HTH-type transcriptional regulator MalT (901 aa).

39 to 46 serves as a coordination point for ATP; it reads SPAGYGKT. Positions 829 to 894 constitute an HTH luxR-type domain; the sequence is ELIRTSPLTQ…DAVQHAQQLL (66 aa). A DNA-binding region (H-T-H motif) is located at residues 853–872; sequence NEQIAGELDVAATTIKTHIR.

It belongs to the MalT family. As to quaternary structure, monomer in solution. Oligomerizes to an active state in the presence of the positive effectors ATP and maltotriose.

Its activity is regulated as follows. Activated by ATP and maltotriose, which are both required for DNA binding. In terms of biological role, positively regulates the transcription of the maltose regulon whose gene products are responsible for uptake and catabolism of malto-oligosaccharides. Specifically binds to the promoter region of its target genes, recognizing a short DNA motif called the MalT box. The protein is HTH-type transcriptional regulator MalT of Klebsiella pneumoniae subsp. pneumoniae (strain ATCC 700721 / MGH 78578).